Reading from the N-terminus, the 441-residue chain is Glutamyl-tRNA reductase (441 aa).

Substrate contacts are provided by residues 49–52, S109, 114–116, and Q120; these read TCNR and EGQ. C50 functions as the Nucleophile in the catalytic mechanism. Position 198 to 203 (198 to 203) interacts with NADP(+); the sequence is GAGRMS.

Belongs to the glutamyl-tRNA reductase family. In terms of assembly, homodimer.

The catalysed reaction is (S)-4-amino-5-oxopentanoate + tRNA(Glu) + NADP(+) = L-glutamyl-tRNA(Glu) + NADPH + H(+). The protein operates within porphyrin-containing compound metabolism; protoporphyrin-IX biosynthesis; 5-aminolevulinate from L-glutamyl-tRNA(Glu): step 1/2. It participates in porphyrin-containing compound metabolism; chlorophyll biosynthesis. Its function is as follows. Catalyzes the NADPH-dependent reduction of glutamyl-tRNA(Glu) to glutamate 1-semialdehyde (GSA). This chain is Glutamyl-tRNA reductase, found in Prochlorococcus marinus (strain NATL2A).